A 302-amino-acid polypeptide reads, in one-letter code: Probable alpha-L-glutamate ligase 1 (302 aa).

Positions 104-287 (MQLLSRKGIG…VANMIIEFIE (184 aa)) constitute an ATP-grasp domain. ATP-binding positions include Lys-141, 178–179 (EY), Asp-187, and 211–213 (RSN). Positions 248, 260, and 262 each coordinate Mg(2+). Mn(2+) is bound by residues Asp-248, Glu-260, and Asn-262.

This sequence belongs to the RimK family. Mg(2+) is required as a cofactor. Requires Mn(2+) as cofactor.

The sequence is that of Probable alpha-L-glutamate ligase 1 from Pseudoalteromonas atlantica (strain T6c / ATCC BAA-1087).